The chain runs to 119 residues: MISKPDKNKLRLKRHRRVRGKISGTAERPRLSVFRSNTNIYAQLIDDVAGVTLASASTLDKSVSKDATKVEQAQAVGKAIAEAGKAKGITEVVFDRGGYIYHGRVKALADAARENGLEF.

This sequence belongs to the universal ribosomal protein uL18 family. Part of the 50S ribosomal subunit; part of the 5S rRNA/L5/L18/L25 subcomplex. Contacts the 5S and 23S rRNAs.

Its function is as follows. This is one of the proteins that bind and probably mediate the attachment of the 5S RNA into the large ribosomal subunit, where it forms part of the central protuberance. The polypeptide is Large ribosomal subunit protein uL18 (Lactobacillus delbrueckii subsp. bulgaricus (strain ATCC 11842 / DSM 20081 / BCRC 10696 / JCM 1002 / NBRC 13953 / NCIMB 11778 / NCTC 12712 / WDCM 00102 / Lb 14)).